A 159-amino-acid chain; its full sequence is Serine-protein kinase RsbW (159 aa).

It belongs to the anti-sigma-factor family.

It catalyses the reaction L-seryl-[protein] + ATP = O-phospho-L-seryl-[protein] + ADP + H(+). The enzyme catalyses L-threonyl-[protein] + ATP = O-phospho-L-threonyl-[protein] + ADP + H(+). Negative regulator of sigma-B activity. Phosphorylates and inactivates its specific antagonist protein, RsbV. Upon phosphorylation of RsbV, RsbW is released and binds to sigma-B, thereby blocking its ability to form an RNA polymerase holoenzyme (E-sigma-B). The sequence is that of Serine-protein kinase RsbW from Staphylococcus aureus (strain Newman).